The chain runs to 282 residues: 2-dehydro-3-deoxyphosphooctonate aldolase (282 aa).

It belongs to the KdsA family.

Its subcellular location is the cytoplasm. The enzyme catalyses D-arabinose 5-phosphate + phosphoenolpyruvate + H2O = 3-deoxy-alpha-D-manno-2-octulosonate-8-phosphate + phosphate. It functions in the pathway carbohydrate biosynthesis; 3-deoxy-D-manno-octulosonate biosynthesis; 3-deoxy-D-manno-octulosonate from D-ribulose 5-phosphate: step 2/3. Its pathway is bacterial outer membrane biogenesis; lipopolysaccharide biosynthesis. This Granulibacter bethesdensis (strain ATCC BAA-1260 / CGDNIH1) protein is 2-dehydro-3-deoxyphosphooctonate aldolase.